The following is a 368-amino-acid chain: Glutamate 5-kinase (368 aa).

Residue Lys15 coordinates ATP. 3 residues coordinate substrate: Ser55, Asp143, and Asn155. ATP is bound by residues Ser175–Asp176 and Ser217–Lys223. One can recognise a PUA domain in the interval Glu277–Ala354.

It belongs to the glutamate 5-kinase family.

Its subcellular location is the cytoplasm. It catalyses the reaction L-glutamate + ATP = L-glutamyl 5-phosphate + ADP. It participates in amino-acid biosynthesis; L-proline biosynthesis; L-glutamate 5-semialdehyde from L-glutamate: step 1/2. In terms of biological role, catalyzes the transfer of a phosphate group to glutamate to form L-glutamate 5-phosphate. The protein is Glutamate 5-kinase of Sphingopyxis alaskensis (strain DSM 13593 / LMG 18877 / RB2256) (Sphingomonas alaskensis).